We begin with the raw amino-acid sequence, 203 residues long: Large ribosomal subunit protein bL25 (203 aa).

The protein belongs to the bacterial ribosomal protein bL25 family. CTC subfamily. Part of the 50S ribosomal subunit; part of the 5S rRNA/L5/L18/L25 subcomplex. Contacts the 5S rRNA. Binds to the 5S rRNA independently of L5 and L18.

This is one of the proteins that binds to the 5S RNA in the ribosome where it forms part of the central protuberance. The polypeptide is Large ribosomal subunit protein bL25 (Cereibacter sphaeroides (strain ATCC 17025 / ATH 2.4.3) (Rhodobacter sphaeroides)).